The sequence spans 257 residues: Protein YIPF5 (257 aa).

At 1-124 the chain is on the cytoplasmic side; it reads MSGFDNLNSG…RAADGSIMNE (124 aa). The interval 75 to 106 is interaction with Sec23; sequence PTTPQPFYGDSFEEEPPLLEELGINFDHIWQK. The chain crosses the membrane as a helical span at residues 125 to 145; the sequence is TDLAGPVVFCLAFGATLLLAG. A topological domain (lumenal) is located at residue Lys-146. A helical transmembrane segment spans residues 147–167; sequence IQFGYVYGISAIGCLGMFCLL. Residues 168 to 173 are Cytoplasmic-facing; that stretch reads NLMSMT. Residues 174 to 194 form a helical membrane-spanning segment; it reads GVSFGCVASVLGYCLLPMILL. Topologically, residues 195–196 are lumenal; sequence SS. Residues 197-217 form a helical membrane-spanning segment; sequence FAVVFSLQGMVGILLTATIIG. Residues 218–236 lie on the Cytoplasmic side of the membrane; sequence WCSFSASKIFISALAMDGQ. The helical transmembrane segment at 237–257 threads the bilayer; it reads QLLVAYPCALLYGVFALISVF.

Belongs to the YIP1 family. In terms of assembly, interacts with the COPII coat components Sec23 (SEC23A and/or SEC23B) and Sec24 (SEC24A and/or SEC24B). Interacts with YIF1A. May interact with RAB1A. Interacts with YIPF3 and YIPF4. Ubiquitously expressed.

Its subcellular location is the golgi apparatus. The protein localises to the cis-Golgi network membrane. It localises to the cytoplasmic vesicle. The protein resides in the COPII-coated vesicle. It is found in the endoplasmic reticulum membrane. Its function is as follows. Plays a role in transport between endoplasmic reticulum and Golgi. In pancreatic beta cells, required to transport proinsulin from endoplasmic reticulum into the Golgi. The chain is Protein YIPF5 from Mus musculus (Mouse).